A 529-amino-acid polypeptide reads, in one-letter code: Protein PAT1 homolog 2 (529 aa).

A disordered region spans residues 153–183 (QILQQQQRWRRRRSPTARSVPAQKPWSREPA).

It belongs to the PAT1 family. Interacts with LSM1.

Its subcellular location is the cytoplasm. It is found in the nucleus. In terms of biological role, RNA-binding protein that acts as a translational repressor. The chain is Protein PAT1 homolog 2 (Patl2) from Mus musculus (Mouse).